The sequence spans 144 residues: Maximins 10/H3 (144 aa).

Positions 1–18 (MNFKYIVAVSFLIASAYA) are cleaved as a signal peptide. Residues 19–43 (RSVKNDEQSLSQRDVLDEESLREFR) constitute a propeptide that is removed on maturation. Residue Ser-70 is modified to Serine amide. The propeptide occupies 74–123 (TAEDHEVMKRLEAVMRDLDSLDYPEEATERETRGFNQEEIANLFTKKEKR). Ile-143 is modified (isoleucine amide).

Belongs to the bombinin family. Expressed by the skin glands.

It is found in the secreted. Its function is as follows. Maximin-10 shows antimicrobial activity against bacteria and against the fungus C.albicans. It has little hemolytic activity. Maximin-H3 shows antibacterial activity against both Gram-positive and Gram-negative bacteria. It also shows antimicrobial activity against the fungus C.albicans. Shows strong hemolytic activity. In Bombina maxima (Giant fire-bellied toad), this protein is Maximins 10/H3.